The following is a 141-amino-acid chain: MAKKVVKMVKLQIPAGKANPAPPVGPALGQAQVNIPSFCSQFNETTKDQMGFIIPVIISVYEDRTFTFVTKTPPASDLLKKAAKIDAGSANAKQTKVATISKSQLQEIANLKLRDLNAYSVEQACKIIAGTARNMGILIED.

This sequence belongs to the universal ribosomal protein uL11 family. As to quaternary structure, part of the ribosomal stalk of the 50S ribosomal subunit. Interacts with L10 and the large rRNA to form the base of the stalk. L10 forms an elongated spine to which L12 dimers bind in a sequential fashion forming a multimeric L10(L12)X complex. One or more lysine residues are methylated.

In terms of biological role, forms part of the ribosomal stalk which helps the ribosome interact with GTP-bound translation factors. This Phytoplasma australiense protein is Large ribosomal subunit protein uL11.